The chain runs to 365 residues: Chorismate synthase (365 aa).

Residues Arg-48 and Arg-54 each contribute to the NADP(+) site. Residues 125 to 127 (RSS), 238 to 239 (NA), Gly-278, 293 to 297 (KPTSS), and Arg-319 each bind FMN.

The protein belongs to the chorismate synthase family. Homotetramer. Requires FMNH2 as cofactor.

The catalysed reaction is 5-O-(1-carboxyvinyl)-3-phosphoshikimate = chorismate + phosphate. The protein operates within metabolic intermediate biosynthesis; chorismate biosynthesis; chorismate from D-erythrose 4-phosphate and phosphoenolpyruvate: step 7/7. Its function is as follows. Catalyzes the anti-1,4-elimination of the C-3 phosphate and the C-6 proR hydrogen from 5-enolpyruvylshikimate-3-phosphate (EPSP) to yield chorismate, which is the branch point compound that serves as the starting substrate for the three terminal pathways of aromatic amino acid biosynthesis. This reaction introduces a second double bond into the aromatic ring system. The sequence is that of Chorismate synthase from Janthinobacterium sp. (strain Marseille) (Minibacterium massiliensis).